A 245-amino-acid chain; its full sequence is Transcriptional regulatory protein VxrB (245 aa).

Residues 31 to 142 enclose the Response regulatory domain; it reads TLLLVEDDKN…ELFARIRAQL (112 aa). A 4-aspartylphosphate modification is found at Asp-78. A DNA-binding region (ompR/PhoB-type) is located at residues 151–245; it reads DSKVVTSNLT…LRGVGYKMKA (95 aa).

Phosphorylated by VxrA.

The protein localises to the cytoplasm. Member of the two-component regulatory system VxrB/VxrA involved in the regulation of diverses processes, including virulence, the type VI secretion system (T6SS) and biofilm formation. VxrB positively regulates the expression of the T6SS, a virulence nanomachine that directly translocates effectors into bacterial or host cells, thereby facilitating colonization by competing with sister cells and intestinal microbiota. In addition, it activates vpsL expression and biofilm formation, and represses motility. May regulate biofilm formation via its regulation of key biofilm regulators and cyclic di-GMP levels. Significantly contributes to both attack and defense via T6SS, while also influencing competition via regulation of biofilm matrix production. Is critical for colonization in the infant mouse model. This Vibrio cholerae serotype O1 (strain ATCC 39315 / El Tor Inaba N16961) protein is Transcriptional regulatory protein VxrB.